We begin with the raw amino-acid sequence, 421 residues long: Testin (421 aa).

The region spanning 92 to 199 (MILTNPVAAK…GDVKLPCEMD (108 aa)) is the PET domain. The disordered stretch occupies residues 133–164 (EKQPVAGSEGAQYRKKQLAKQLPAHDQDPSKC). A compositionally biased stretch (basic and acidic residues) spans 155–164 (PAHDQDPSKC). LIM zinc-binding domains lie at 234 to 297 (YFCY…CDSE), 299 to 359 (PRCA…NHAV), and 362 to 421 (QGCH…KMMS).

The protein belongs to the prickle / espinas / testin family. In terms of assembly, interacts via LIM domain 1 with ZYX. Interacts (via LIM domain 3) with ENAH and VASP. Interacts with ALKBH4, talin, actin, alpha-actinin, GRIP1 and PXN. Interacts (via LIM domain 2) with ACTL7A (via N-terminus). Heterodimer with ACTL7A; the heterodimer interacts with ENAH to form a heterotrimer.

It is found in the cytoplasm. It localises to the cell junction. Its subcellular location is the focal adhesion. Scaffold protein that may play a role in cell adhesion, cell spreading and in the reorganization of the actin cytoskeleton. Plays a role in the regulation of cell proliferation. May act as a tumor suppressor. This is Testin (TES) from Plecturocebus moloch (Dusky titi monkey).